The following is a 647-amino-acid chain: Acetyl-coenzyme A synthetase (647 aa).

CoA-binding positions include 190–193 (RGGR), Thr-308, and Asn-332. Residues 384 to 386 (GEP), 408 to 413 (DTWWQT), Asp-497, and Arg-512 contribute to the ATP site. Position 520 (Ser-520) interacts with CoA. Arg-523 provides a ligand contact to ATP. Residues Val-534, His-536, and Val-539 each coordinate Mg(2+). Arg-581 contacts CoA. Lys-606 is modified (N6-acetyllysine).

It belongs to the ATP-dependent AMP-binding enzyme family. Mg(2+) serves as cofactor. In terms of processing, acetylated. Deacetylation by the SIR2-homolog deacetylase activates the enzyme.

The catalysed reaction is acetate + ATP + CoA = acetyl-CoA + AMP + diphosphate. Its function is as follows. Catalyzes the conversion of acetate into acetyl-CoA (AcCoA), an essential intermediate at the junction of anabolic and catabolic pathways. AcsA undergoes a two-step reaction. In the first half reaction, AcsA combines acetate with ATP to form acetyl-adenylate (AcAMP) intermediate. In the second half reaction, it can then transfer the acetyl group from AcAMP to the sulfhydryl group of CoA, forming the product AcCoA. The chain is Acetyl-coenzyme A synthetase from Parvibaculum lavamentivorans (strain DS-1 / DSM 13023 / NCIMB 13966).